Reading from the N-terminus, the 324-residue chain is Glyoxylate/hydroxypyruvate reductase B (324 aa).

Active-site residues include R237 and E266. H285 serves as the catalytic Proton donor.

This sequence belongs to the D-isomer specific 2-hydroxyacid dehydrogenase family. GhrB subfamily. As to quaternary structure, homodimer.

Its subcellular location is the cytoplasm. It catalyses the reaction glycolate + NADP(+) = glyoxylate + NADPH + H(+). The catalysed reaction is (R)-glycerate + NAD(+) = 3-hydroxypyruvate + NADH + H(+). It carries out the reaction (R)-glycerate + NADP(+) = 3-hydroxypyruvate + NADPH + H(+). In terms of biological role, catalyzes the NADPH-dependent reduction of glyoxylate and hydroxypyruvate into glycolate and glycerate, respectively. In Citrobacter koseri (strain ATCC BAA-895 / CDC 4225-83 / SGSC4696), this protein is Glyoxylate/hydroxypyruvate reductase B.